The primary structure comprises 691 residues: Proprotein convertase subtilisin/kexin type 9 (691 aa).

Positions 1–30 (MGIRCSTWLRWPLSPQLLLLLLLCPTGSRA) are cleaved as a signal peptide. Residues 31-151 (QDEDGDYEEL…IEEDSLVFAQ (121 aa)) constitute a propeptide that is removed on maturation. Tyrosine 37 carries the post-translational modification Sulfotyrosine. Serine 46 carries the phosphoserine modification. The Peptidase S8 domain occupies 154–441 (PWNLERIIPA…QRVLTPNRVA (288 aa)). Residues aspartate 185 and histidine 225 each act as charge relay system in the active site. Intrachain disulfides connect cysteine 222–cysteine 254 and cysteine 322–cysteine 357. The Charge relay system role is filled by serine 385. The C-terminal domain stretch occupies residues 449–691 (ETGGQLLCRT…PSAKASWVHQ (243 aa)). 3 disulfides stabilise this stretch: cysteine 456–cysteine 526, cysteine 476–cysteine 525, and cysteine 485–cysteine 508. Residues 495-497 (RGD) carry the Cell attachment site motif. Residue asparagine 532 is glycosylated (N-linked (GlcNAc...) asparagine). 6 disulfides stabilise this stretch: cysteine 533–cysteine 600, cysteine 551–cysteine 599, cysteine 561–cysteine 587, cysteine 607–cysteine 678, cysteine 625–cysteine 677, and cysteine 634–cysteine 653. Serine 687 carries the phosphoserine modification.

Belongs to the peptidase S8 family. In terms of assembly, monomer. Can self-associate to form dimers and higher multimers which may have increased LDLR degrading activity. The precursor protein but not the mature protein may form multimers. Interacts with APOB, VLDLR, LRP8/APOER2 and BACE1. The full-length immature form (pro-PCSK9) interacts with SCNN1A, SCNN1B and SCNN1G. The pro-PCSK9 form (via C-terminal domain) interacts with LDLR. Interacts (via the C-terminal domain) with ANXA2 (via repeat Annexin 1); the interaction inhibits the degradation of LDLR. Ca(2+) is required as a cofactor. Cleavage by furin and PCSK5 generates a truncated inactive protein that is unable to induce LDLR degradation. In terms of processing, undergoes autocatalytic cleavage in the endoplasmic reticulum to release the propeptide from the N-terminus and the cleavage of the propeptide is strictly required for its maturation and activation. The cleaved propeptide however remains associated with the catalytic domain through non-covalent interactions, preventing potential substrates from accessing its active site. As a result, it is secreted from cells as a propeptide-containing, enzymatically inactive protein. Post-translationally, phosphorylation protects the propeptide against proteolysis. In terms of tissue distribution, highly expressed in 12-day embryo. In the adult, strongly expressed in liver, small intestine, jejunum, and to a lesser extent in kidney, lung, spleen and thymus. Expression in the liver is up-regulated following partial hepatectomy.

It localises to the cytoplasm. Its subcellular location is the secreted. It is found in the endosome. The protein resides in the lysosome. The protein localises to the cell surface. It localises to the endoplasmic reticulum. Its subcellular location is the golgi apparatus. Its activity is regulated as follows. Its proteolytic activity is autoinhibited by the non-covalent binding of the propeptide to the catalytic domain. Inhibited by EGTA. Functionally, crucial player in the regulation of plasma cholesterol homeostasis. Binds to low-density lipid receptor family members: low density lipoprotein receptor (LDLR), very low density lipoprotein receptor (VLDLR), apolipoprotein E receptor (LRP1/APOER) and apolipoprotein receptor 2 (LRP8/APOER2), and promotes their degradation in intracellular acidic compartments. Acts via a non-proteolytic mechanism to enhance the degradation of the hepatic LDLR through a clathrin LDLRAP1/ARH-mediated pathway. May prevent the recycling of LDLR from endosomes to the cell surface or direct it to lysosomes for degradation. Can induce ubiquitination of LDLR leading to its subsequent degradation. Inhibits intracellular degradation of APOB via the autophagosome/lysosome pathway in a LDLR-independent manner. Involved in the disposal of non-acetylated intermediates of BACE1 in the early secretory pathway. Inhibits epithelial Na(+) channel (ENaC)-mediated Na(+) absorption by reducing ENaC surface expression primarily by increasing its proteasomal degradation. Regulates neuronal apoptosis via modulation of LRP8/APOER2 levels and related anti-apoptotic signaling pathways. The protein is Proprotein convertase subtilisin/kexin type 9 (Pcsk9) of Rattus norvegicus (Rat).